Consider the following 264-residue polypeptide: MRTLWMALCVLARLWPGALAGCADAGRCCPGRDPACFASGWRQDRVYGTCFCDQACRLTGDCCFDYARACPARPCIVGEWSPWSGCASQCRPTARVRRRAVQQEPQNGGEPCPALEERAGCLEYATPQGEDCGHAFVPAFITTSAFNKERTRQAASPHWTTSTEDAGYCMEFKTESLTHHCALENRPLTRWMQYLREGYTVCVDCQPPAMNSVSLRCSGDGLDSDGNQTLHWQAIGNPRCQGTWKKVRRVEQCSCPAVHSFIFI.

Positions 1–20 (MRTLWMALCVLARLWPGALA) are cleaved as a signal peptide. One can recognise an SMB domain in the interval 24-75 (DAGRCCPGRDPACFASGWRQDRVYGTCFCDQACRLTGDCCFDYARACPARPC). 7 disulfide bridges follow: Cys-28/Cys-36, Cys-28/Cys-52, Cys-36/Cys-70, Cys-50/Cys-52, Cys-50/Cys-63, Cys-56/Cys-62, and Cys-63/Cys-70. One can recognise a TSP type-1 domain in the interval 74 to 127 (PCIVGEWSPWSGCASQCRPTARVRRRAVQQEPQNGGEPCPALEERAGCLEYATP). Asn-227 carries N-linked (GlcNAc...) asparagine glycosylation.

Belongs to the thrombospondin family.

The protein localises to the secreted. Its subcellular location is the extracellular space. It is found in the extracellular matrix. The polypeptide is Somatomedin-B and thrombospondin type-1 domain-containing protein (SBSPON) (Bos taurus (Bovine)).